A 101-amino-acid chain; its full sequence is DNA-binding protein Fis (101 aa).

A DNA-binding region (H-T-H motif) is located at residues 77-96; that stretch reads QTRAANMLGINRGTLRKKLK.

The protein belongs to the transcriptional regulatory Fis family. As to quaternary structure, homodimer.

Functionally, activates ribosomal RNA transcription. Plays a direct role in upstream activation of rRNA promoters. In Shewanella baltica (strain OS223), this protein is DNA-binding protein Fis.